Reading from the N-terminus, the 328-residue chain is Malate dehydrogenase (328 aa).

Residue 11–17 (GAAGQIG) participates in NAD(+) binding. Positions 94 and 100 each coordinate substrate. Residues asparagine 107, glutamine 114, and 131–133 (VGN) each bind NAD(+). Substrate contacts are provided by asparagine 133 and arginine 164. Histidine 189 serves as the catalytic Proton acceptor.

Belongs to the LDH/MDH superfamily. MDH type 2 family.

The enzyme catalyses (S)-malate + NAD(+) = oxaloacetate + NADH + H(+). Catalyzes the reversible oxidation of malate to oxaloacetate. The chain is Malate dehydrogenase from Acinetobacter baylyi (strain ATCC 33305 / BD413 / ADP1).